The chain runs to 494 residues: Tripartite motif-containing protein 5 (494 aa).

At Ala2 the chain carries N-acetylalanine. The RING-type zinc finger occupies 15-59; that stretch reads CPICLELLTEPLSLDCGHSFCQACITANHKESTLHQGERSCPLCR. A Phosphoserine modification is found at Ser86. A B box-type zinc finger spans residues 91-132; that stretch reads QKVDLCARHGEKLLLFCQQDGNVICWLCERSQEHRGHHTFLV. Cys96, His99, Cys118, and His124 together coordinate Zn(2+). A coiled-coil region spans residues 140 to 223; it reads RENLQVVLEM…RLVQSENDMV (84 aa). Residues 186–199 are required for interaction with GABARAP and for autophagy; it reads FKQLRDILDCEESN. The B30.2/SPRY domain occupies 280–494; sequence PDLKGMLQVS…LPMTLCSPRS (215 aa).

The protein belongs to the TRIM/RBCC family. In terms of assembly, can form homodimers and homotrimers. In addition to lower-order dimerization, also exhibits a higher-order multimerization and both low- and high-order multimerizations are essential for its restriction activity. Interacts with BTBD1 and BTBD2. Interacts with PSMC4, PSMC5, PSMD7 and HSPA8/HSC70. Interacts (via B30.2/SPRY domain) with HSPA1A/B. Interacts with PSMC2, MAP3K7/TAK1, TAB2 and TAB3. Interacts with SQSTM1. Interacts with TRIM6 and TRIM34. Interacts with ULK1 (phosphorylated form), GABARAP, GABARAPL1, GABARAPL2, MAP1LC3A, MAP1LC3C and BECN1. In terms of processing, degraded in a proteasome-independent fashion in the absence of viral infection but in a proteasome-dependent fashion following exposure to restriction sensitive virus. Post-translationally, autoubiquitinated in a RING finger- and UBE2D2-dependent manner. Monoubiquitinated by TRIM21. Deubiquitinated by Yersinia YopJ. Ubiquitination may not lead to proteasomal degradation.

It is found in the cytoplasm. The protein localises to the nucleus. The enzyme catalyses S-ubiquitinyl-[E2 ubiquitin-conjugating enzyme]-L-cysteine + [acceptor protein]-L-lysine = [E2 ubiquitin-conjugating enzyme]-L-cysteine + N(6)-ubiquitinyl-[acceptor protein]-L-lysine.. Its pathway is protein modification; protein ubiquitination. In terms of biological role, capsid-specific restriction factor that prevents infection from non-host-adapted retroviruses. Blocks viral replication early in the life cycle, after viral entry but before reverse transcription. In addition to acting as a capsid-specific restriction factor, also acts as a pattern recognition receptor that activates innate immune signaling in response to the retroviral capsid lattice. Binding to the viral capsid triggers its E3 ubiquitin ligase activity, and in concert with the heterodimeric ubiquitin conjugating enzyme complex UBE2V1-UBE2N (also known as UBC13-UEV1A complex) generates 'Lys-63'-linked polyubiquitin chains, which in turn are catalysts in the autophosphorylation of the MAP3K7/TAK1 complex (includes TAK1, TAB2, and TAB3). Activation of the MAP3K7/TAK1 complex by autophosphorylation results in the induction and expression of NF-kappa-B and MAPK-responsive inflammatory genes, thereby leading to an innate immune response in the infected cell. Plays a role in regulating autophagy through activation of autophagy regulator BECN1 by causing its dissociation from its inhibitors BCL2 and TAB2. The chain is Tripartite motif-containing protein 5 (TRIM5) from Plecturocebus donacophilus (Bolivian gray titi monkey).